We begin with the raw amino-acid sequence, 151 residues long: UPF0178 protein Shal_3046 (151 aa).

It belongs to the UPF0178 family.

This Shewanella halifaxensis (strain HAW-EB4) protein is UPF0178 protein Shal_3046.